Consider the following 642-residue polypeptide: MSSTSTSNTAGITYPKAYDVVVIGGGHAGTEAALAAARMGAQTLLLTHNIETLGQMSCNPAIGGIGKSHLVREIDALGGAMALATDKAGIQFRVLNSRKGAAVRATRAQADRILYKAAIRHTLENQPNLDLFQQGADDILVENGKACAVVTATGIIFRTKTVVLTSGTFLGGVIHIGLDNSKGGRAGDQPSIKLAERLRELKLPVGRLKTGTPARIDARTVDFSVMQTQPGDTPLPVMSFMGNVDMHPEQVNCFITHTNEKTHDIIRKHLDRSPLFSGTIEGVGPRYCPSIEDKIHRFADKNSHQIFIEPEGLTTHELYPNGISTSLPFDVQLEFIRTMAGLENAHITRPGYAIEYDYFNPQNLKPTLETKSIDSLYFAGQINGTTGYEEAGVQGLLAGVNAALSTQDNPVMDSWTPRRDQAYLGVLVDDLITHGTKEPYRMFTSRAEYRLLLREDNADQRLTEIGRKLGLVDDTRWQAYQQKMESMATESARLKDLWATPHNELGKKFTEQTGEVLSKEATAYDLLKRPNVGFNDIAAVTGAQVAADVGEQIEISVKYAGYIDRQQEDIDQMKRLENTQLPADFDYKAVSGLSNEIVQKLNDIRPATLAQASRISGVTPAAIQLLGMTLKKQKKAKAALDI.

24 to 29 (GGGHAG) is an FAD binding site. 284 to 298 (GPRYCPSIEDKIHRF) contributes to the NAD(+) binding site.

This sequence belongs to the MnmG family. As to quaternary structure, homodimer. Heterotetramer of two MnmE and two MnmG subunits. Requires FAD as cofactor.

It localises to the cytoplasm. In terms of biological role, NAD-binding protein involved in the addition of a carboxymethylaminomethyl (cmnm) group at the wobble position (U34) of certain tRNAs, forming tRNA-cmnm(5)s(2)U34. The sequence is that of tRNA uridine 5-carboxymethylaminomethyl modification enzyme MnmG from Psychrobacter sp. (strain PRwf-1).